The following is a 202-amino-acid chain: P25 protein (202 aa).

In terms of domain architecture, Flavodoxin-like spans 7–195 (VAIVIYSTYG…EIARIQGETF (189 aa)). Position 181 is a phosphoserine (S181).

Belongs to the WrbA family. As to quaternary structure, homodimer.

Its function is as follows. Unknown. Target of pap1 transcription factor. Confers brefeldin A resistance in S.pombe. This chain is P25 protein (obr1), found in Schizosaccharomyces pombe (strain 972 / ATCC 24843) (Fission yeast).